A 107-amino-acid polypeptide reads, in one-letter code: Protein KleE (107 aa).

This is Protein KleE (kleE) from Escherichia coli.